Here is a 341-residue protein sequence, read N- to C-terminus: Heme A synthase (341 aa).

5 helical membrane-spanning segments follow: residues 11–31, 101–121, 127–147, 160–180, and 194–214; these read AVST…IIGG, LIGL…HLSA, LFGL…MVAS, LATH…FSLE, and AGVT…GAFV. Position 259 (His-259) interacts with heme. Helical transmembrane passes span 261–278, 288–308, and 315–335; these read WTGY…WQVW, FMVI…AALL, and LSLA…AAAW. His-319 contacts heme.

It belongs to the COX15/CtaA family. Type 2 subfamily. As to quaternary structure, interacts with CtaB. The cofactor is heme b.

Its subcellular location is the cell membrane. It carries out the reaction Fe(II)-heme o + 2 A + H2O = Fe(II)-heme a + 2 AH2. The protein operates within porphyrin-containing compound metabolism; heme A biosynthesis; heme A from heme O: step 1/1. Its function is as follows. Catalyzes the conversion of heme O to heme A by two successive hydroxylations of the methyl group at C8. The first hydroxylation forms heme I, the second hydroxylation results in an unstable dihydroxymethyl group, which spontaneously dehydrates, resulting in the formyl group of heme A. The protein is Heme A synthase of Maricaulis maris (strain MCS10) (Caulobacter maris).